A 309-amino-acid polypeptide reads, in one-letter code: Dihydroorotate dehydrogenase B (NAD(+)), catalytic subunit (309 aa).

FMN is bound by residues serine 21 and 45-46 (KA). Residues lysine 45 and 69–73 (NAIGL) contribute to the substrate site. FMN is bound by residues asparagine 99 and asparagine 127. Asparagine 127 provides a ligand contact to substrate. Residue cysteine 130 is the Nucleophile of the active site. Residues lysine 165 and isoleucine 191 each coordinate FMN. Residue 192–193 (NT) participates in substrate binding. FMN is bound by residues glycine 217, 243-244 (GG), and 265-266 (GT).

This sequence belongs to the dihydroorotate dehydrogenase family. Type 1 subfamily. Heterotetramer of 2 PyrK and 2 PyrD type B subunits. Requires FMN as cofactor.

The protein localises to the cytoplasm. The enzyme catalyses (S)-dihydroorotate + NAD(+) = orotate + NADH + H(+). It functions in the pathway pyrimidine metabolism; UMP biosynthesis via de novo pathway; orotate from (S)-dihydroorotate (NAD(+) route): step 1/1. Functionally, catalyzes the conversion of dihydroorotate to orotate with NAD(+) as electron acceptor. This chain is Dihydroorotate dehydrogenase B (NAD(+)), catalytic subunit (pyrD), found in Bacillus cereus (strain ATCC 14579 / DSM 31 / CCUG 7414 / JCM 2152 / NBRC 15305 / NCIMB 9373 / NCTC 2599 / NRRL B-3711).